The chain runs to 96 residues: Small ribosomal subunit protein bS6 (96 aa).

The protein belongs to the bacterial ribosomal protein bS6 family.

Binds together with bS18 to 16S ribosomal RNA. In Cutibacterium acnes (strain DSM 16379 / KPA171202) (Propionibacterium acnes), this protein is Small ribosomal subunit protein bS6.